The sequence spans 1104 residues: Collagenase ColA (1104 aa).

Residues 1–39 (MKKNLKRGELTKLKLVERWSATFTLAAFILFNSSFKVLA) form the signal peptide. Positions 40–86 (ADKKVENSNNGQITREINADQISKTELNNEVATDNNRPLGPSIAPSR) are excised as a propeptide. Residues 87 to 761 (ARNNKIYTFD…YVYDVVFHGM (675 aa)) form an S1 metalloprotease domain region. An activator domain region spans residues 93 to 367 (YTFDELNRMN…AANDLDLNFG (275 aa)). The interval 377-646 (DFNKIKADAR…MDSLLNNIDN (270 aa)) is catalytic subdomain. Residue Glu477 participates in Ca(2+) binding. His502 is a binding site for Zn(2+). Glu503 is an active-site residue. Zn(2+) is bound at residue His506. Ca(2+)-binding residues include Gly510, Val514, and Gly516. Zn(2+) is bound at residue Glu534. The tract at residues 654-767 (DEYVNGHEAK…FHGMNTDTNT (114 aa)) is helper subdomain. An S2 domain region spans residues 762–860 (NTDTNTDVHV…KKIKVVEDKP (99 aa)). Positions 772, 773, 800, 802, 841, 866, 868, 870, 894, 897, 993, 995, 997, 1016, 1020, 1022, and 1023 each coordinate Ca(2+). The region spanning 774 to 862 (EPKAVIKSDS…IKVVEDKPVE (89 aa)) is the PKD domain. The tract at residues 865–979 (NESEPNNDFE…TYTVNVKGNL (115 aa)) is S3a collagen-binding domain. The S3b collagen-binding domain stretch occupies residues 992–1104 (KEVENNNDFD…GNYIVNLQNK (113 aa)).

Belongs to the peptidase M9B family. Collagenase subfamily. It depends on Ca(2+) as a cofactor. Zn(2+) is required as a cofactor.

It is found in the secreted. It catalyses the reaction Digestion of native collagen in the triple helical region at Xaa-|-Gly bonds. With synthetic peptides, a preference is shown for Gly at P3 and P1', Pro and Ala at P2 and P2', and hydroxyproline, Ala or Arg at P3'.. Clostridial collagenases are among the most efficient degraders of eukaryotic collagen known; saprophytes use collagen as a carbon source while pathogens additionally digest collagen to aid in host colonization. Has both tripeptidylcarboxypeptidase on Gly-X-Y and endopeptidase activities; the endopeptidase cuts within the triple helix region of collagen while tripeptidylcarboxypeptidase successively digests the exposed ends, thus clostridial collagenases can digest large sections of collagen. This Clostridium perfringens (strain 13 / Type A) protein is Collagenase ColA (colA).